The sequence spans 234 residues: MSVYLAEFLGTMLLIILGDGVVANVVLKKSKGHNSGWIVITTGWGLAVAMSVYLVGRISGAHINPAVTIGLAFIGQFPWSKVPGYIFSQILGAFVGAILVYLTYLPHWKETDDPDAKLAVFCTGPAVRKYGANLLTEIIGTMVLLMGVLGIGANKLADGLNPLLVGFLVWSIGLSLGGPTGYAINPARDFGPRLAHAILPIPGKRDSDWSYSWVPIIGPIIGGILGASLYNWLF.

2 helical membrane-spanning segments follow: residues 3–23 (VYLAEFLGTMLLIILGDGVVA) and 36–56 (GWIVITTGWGLAVAMSVYLVG). Residues 64-66 (NPA) carry the NPA 1 motif. 3 helical membrane-spanning segments follow: residues 82–102 (VPGYIFSQILGAFVGAILVYL), 134–154 (LLTEIIGTMVLLMGVLGIGAN), and 164–184 (LVGFLVWSIGLSLGGPTGYAI). Positions 185–187 (NPA) match the NPA 2 motif. A helical membrane pass occupies residues 214 to 234 (VPIIGPIIGGILGASLYNWLF).

The protein belongs to the MIP/aquaporin (TC 1.A.8) family.

It is found in the cell membrane. The catalysed reaction is glycerol(in) = glycerol(out). Mediates glycerol diffusion across the cytoplasmic membrane via a pore-type mechanism. In Thermotoga maritima (strain ATCC 43589 / DSM 3109 / JCM 10099 / NBRC 100826 / MSB8), this protein is Probable glycerol uptake facilitator protein (glpF).